The sequence spans 392 residues: Cytochrome b (392 aa).

The next 4 membrane-spanning stretches (helical) occupy residues 38–58 (FGSL…FLAM), 82–104 (WLLR…LHIF), 119–139 (VRCL…TGYV), and 185–205 (FFSL…LHLA). The heme b site is built by histidine 88 and histidine 102. The heme b site is built by histidine 189 and histidine 203. An a ubiquinone-binding site is contributed by histidine 208. Transmembrane regions (helical) follow at residues 231–251 (FYVK…IWIF), 295–315 (SGGV…PFFK), 327–347 (IHQG…WIGC), and 354–373 (FVTI…AITP).

This sequence belongs to the cytochrome b family. The main subunits of complex b-c1 are: cytochrome b, cytochrome c1 and the Rieske protein. Requires heme b as cofactor.

The protein localises to the mitochondrion inner membrane. In terms of biological role, component of the ubiquinol-cytochrome c reductase complex (complex III or cytochrome b-c1 complex) that is part of the mitochondrial respiratory chain. The b-c1 complex mediates electron transfer from ubiquinol to cytochrome c. Contributes to the generation of a proton gradient across the mitochondrial membrane that is then used for ATP synthesis. The chain is Cytochrome b (MT-CYB) from Vicia faba (Broad bean).